The sequence spans 475 residues: MAAGALRGLPVAGGGESSESEDDGWEIGYLDRTSQKLKGLLPIEEKKEKFKKAMTIGDVSLVQELLDSGISVDSTFQYGWTPLMYAASVANAELVRVLLDRGANASFEKDKQTILITACSAHGSEEQILKCVELLLSRNADPNVACRRLMTPIMYAARDGHTQVVALLVAHGAEVNTQDENGYTALTWAARQGHKNIVLKLLELGANKMLQTKDGKMPSEIAKRNKHHEIFNLLSFTLNPLEGKLQQLTKEDTICKILTTDSDREKDHIFSSYTAFGDLEVFLHGIGLEHMTDLLKERDITLRHLLTMREDEFTKNGITSKDQQKILAALKELQVEEIQFGELSEEIKLEISGDEFLNFLLKLNKQCGHLITAVQNIITELPVNSQKITLEWASPRNFTSVCEELVNNAEDLSEEVCKLKDLIQKLQNERENDPTHIQLREEVSTWNSRILKRTAITVCGFGFLLFICKLTFQRK.

Residues 1-25 (MAAGALRGLPVAGGGESSESEDDGW) form a disordered region. 3 positions are modified to phosphoserine: S17, S18, and S20. ANK repeat units follow at residues 45–74 (EKKE…SVDS), 78–107 (YGWT…NASF), 110–144 (DKQT…DPNV), 148–177 (RLMT…EVNT), 181–210 (NGYT…NKML), and 214–243 (DGKM…PLEG). The SAM domain occupies 272–334 (SYTAFGDLEV…KILAALKELQ (63 aa)).

In terms of assembly, interacts with DDX4, PIWIL1, RANBP9 and TDRD1.

The protein resides in the cytoplasm. Functionally, plays a central role during spermatogenesis by repressing transposable elements and preventing their mobilization, which is essential for the germline integrity. Acts via the piRNA metabolic process, which mediates the repression of transposable elements during meiosis by forming complexes composed of piRNAs and Piwi proteins and governs the methylation and subsequent repression of transposons. Its association with pi-bodies suggests a participation in the primary piRNAs metabolic process. Required prior to the pachytene stage to facilitate the production of multiple types of piRNAs, including those associated with repeats involved in the regulation of retrotransposons. May act by mediating protein-protein interactions during germ cell maturation. In Papio anubis (Olive baboon), this protein is Ankyrin repeat, SAM and basic leucine zipper domain-containing protein 1 (ASZ1).